The primary structure comprises 69 residues: Cell division protein CrgA (69 aa).

2 consecutive transmembrane segments (helical) span residues 14–34 (VWFP…MVLF) and 45–65 (AVGT…FAMM).

The protein belongs to the CrgA family.

The protein resides in the cell membrane. Its function is as follows. Involved in cell division. This is Cell division protein CrgA from Tropheryma whipplei (strain TW08/27) (Whipple's bacillus).